The sequence spans 159 residues: Cytochrome c-type biogenesis protein CcmE (159 aa).

Residues 1–8 (MNIRRKNR) are Cytoplasmic-facing. The chain crosses the membrane as a helical; Signal-anchor for type II membrane protein span at residues 9-29 (LWIACAVLAGLALTIGLVLYA). Topologically, residues 30-159 (LRSNIDLFYT…PASVYKDPAS (130 aa)) are periplasmic. The heme site is built by His-130 and Tyr-134. Basic and acidic residues predominate over residues 132–147 (ENYTPPEVEKAMEANH). Positions 132-159 (ENYTPPEVEKAMEANHRRPASVYKDPAS) are disordered.

The protein belongs to the CcmE/CycJ family.

It is found in the cell inner membrane. Functionally, heme chaperone required for the biogenesis of c-type cytochromes. Transiently binds heme delivered by CcmC and transfers the heme to apo-cytochromes in a process facilitated by CcmF and CcmH. The sequence is that of Cytochrome c-type biogenesis protein CcmE from Escherichia coli (strain 55989 / EAEC).